The following is a 267-amino-acid chain: Probable 3-methyl-2-oxobutanoate hydroxymethyltransferase (267 aa).

Belongs to the PanB family.

The enzyme catalyses 3-methyl-2-oxobutanoate + (6R)-5,10-methylene-5,6,7,8-tetrahydrofolate + H2O = 2-dehydropantoate + (6S)-5,6,7,8-tetrahydrofolate. It functions in the pathway cofactor biosynthesis; (R)-pantothenate biosynthesis; (R)-pantoate from 3-methyl-2-oxobutanoate: step 1/2. This chain is Probable 3-methyl-2-oxobutanoate hydroxymethyltransferase, found in Schizosaccharomyces pombe (strain 972 / ATCC 24843) (Fission yeast).